A 643-amino-acid chain; its full sequence is Pescadillo homolog (643 aa).

Residues 305-323 show a composition bias toward basic and acidic residues; that stretch reads EKTKEKNHKSDNNPHEHTT. Positions 305-329 are disordered; that stretch reads EKTKEKNHKSDNNPHEHTTNIDNNN. Residues 378 to 474 form the BRCT domain; that stretch reads KLKELFKNHI…NILPCSDYLT (97 aa). Residues 531–615 are a coiled coil; the sequence is NYKEEEEEEN…IVLSKKKRKL (85 aa).

It belongs to the pescadillo family. In terms of assembly, interacts with dual specificity protein phosphatase YVH1.

The protein resides in the nucleus. It is found in the nucleolus. It localises to the nucleoplasm. In terms of biological role, required for maturation of ribosomal RNAs and formation of the large ribosomal subunit. In Plasmodium falciparum (isolate 3D7), this protein is Pescadillo homolog.